The chain runs to 776 residues: Mitochondrial intermediate peptidase (776 aa).

The transit peptide at 1–38 (MLNSARTVLARHSARQLYRFRGCLVHQQRHRHQVQRTL) directs the protein to the mitochondrion. Residue His-560 participates in Zn(2+) binding. Glu-561 is an active-site residue. His-564 and His-567 together coordinate Zn(2+).

The protein belongs to the peptidase M3 family. Zn(2+) serves as cofactor.

The protein resides in the mitochondrion matrix. The catalysed reaction is Release of an N-terminal octapeptide as second stage of processing of some proteins imported into the mitochondrion.. In terms of biological role, cleaves proteins, imported into the mitochondrion, to their mature size. While most mitochondrial precursor proteins are processed to the mature form in one step by mitochondrial processing peptidase (MPP), the sequential cleavage by MIP of an octapeptide after initial processing by MPP is a required step for a subgroup of nuclear-encoded precursor proteins destined for the matrix or the inner membrane. The polypeptide is Mitochondrial intermediate peptidase (OCT1) (Coprinopsis cinerea (strain Okayama-7 / 130 / ATCC MYA-4618 / FGSC 9003) (Inky cap fungus)).